The following is a 611-amino-acid chain: Elongation factor 4 1 (611 aa).

Positions 11-193 (QHIRNFSIVA…QIVHKIPAPQ (183 aa)) constitute a tr-type G domain. GTP-binding positions include 23-28 (DHGKST) and 140-143 (NKID).

The protein belongs to the TRAFAC class translation factor GTPase superfamily. Classic translation factor GTPase family. LepA subfamily.

The protein resides in the cell membrane. The catalysed reaction is GTP + H2O = GDP + phosphate + H(+). Its function is as follows. Required for accurate and efficient protein synthesis under certain stress conditions. May act as a fidelity factor of the translation reaction, by catalyzing a one-codon backward translocation of tRNAs on improperly translocated ribosomes. Back-translocation proceeds from a post-translocation (POST) complex to a pre-translocation (PRE) complex, thus giving elongation factor G a second chance to translocate the tRNAs correctly. Binds to ribosomes in a GTP-dependent manner. The protein is Elongation factor 4 1 of Lactiplantibacillus plantarum (strain ATCC BAA-793 / NCIMB 8826 / WCFS1) (Lactobacillus plantarum).